The following is a 360-amino-acid chain: Photosystem II protein D1 (360 aa).

The next 3 helical transmembrane spans lie at 29–46, 118–133, and 142–156; these read YIGWFGVLMIPTLLTATT, HFLLGVCGWIGREWEF, and WISVAFTAPVAAASA. Histidine 118 provides a ligand contact to chlorophyll a. Tryptophan 126 contributes to the pheophytin a binding site. [CaMn4O5] cluster contacts are provided by aspartate 170 and glutamate 189. Residues 197–218 form a helical membrane-spanning segment; the sequence is FHQLGVAGVFGGSLFSAMHGSL. Residue histidine 198 participates in chlorophyll a binding. A quinone is bound by residues histidine 215 and 264 to 265; that span reads SF. Position 215 (histidine 215) interacts with Fe cation. A Fe cation-binding site is contributed by histidine 272. A helical transmembrane segment spans residues 274–288; it reads FLGLWPVVGIWFTAL. Residues histidine 332, glutamate 333, aspartate 342, and alanine 344 each coordinate [CaMn4O5] cluster. Residues 345 to 360 constitute a propeptide that is removed on maturation; that stretch reads AGESLPVALTAPAVNG.

The protein belongs to the reaction center PufL/M/PsbA/D family. As to quaternary structure, PSII is composed of 1 copy each of membrane proteins PsbA, PsbB, PsbC, PsbD, PsbE, PsbF, PsbH, PsbI, PsbJ, PsbK, PsbL, PsbM, PsbT, PsbX, PsbY, PsbZ, Psb30/Ycf12, at least 3 peripheral proteins of the oxygen-evolving complex and a large number of cofactors. It forms dimeric complexes. The cofactor is The D1/D2 heterodimer binds P680, chlorophylls that are the primary electron donor of PSII, and subsequent electron acceptors. It shares a non-heme iron and each subunit binds pheophytin, quinone, additional chlorophylls, carotenoids and lipids. D1 provides most of the ligands for the Mn4-Ca-O5 cluster of the oxygen-evolving complex (OEC). There is also a Cl(-1) ion associated with D1 and D2, which is required for oxygen evolution. The PSII complex binds additional chlorophylls, carotenoids and specific lipids.. Post-translationally, tyr-161 forms a radical intermediate that is referred to as redox-active TyrZ, YZ or Y-Z. C-terminally processed by CTPA; processing is essential to allow assembly of the oxygen-evolving complex and thus photosynthetic growth.

The protein localises to the plastid. It is found in the chloroplast thylakoid membrane. The enzyme catalyses 2 a plastoquinone + 4 hnu + 2 H2O = 2 a plastoquinol + O2. In terms of biological role, photosystem II (PSII) is a light-driven water:plastoquinone oxidoreductase that uses light energy to abstract electrons from H(2)O, generating O(2) and a proton gradient subsequently used for ATP formation. It consists of a core antenna complex that captures photons, and an electron transfer chain that converts photonic excitation into a charge separation. The D1/D2 (PsbA/PsbD) reaction center heterodimer binds P680, the primary electron donor of PSII as well as several subsequent electron acceptors. This chain is Photosystem II protein D1, found in Rhodomonas salina (Cryptomonas salina).